The chain runs to 344 residues: Transcription factor JunB (344 aa).

Glycyl lysine isopeptide (Lys-Gly) (interchain with G-Cter in SUMO2) cross-links involve residues Lys-4, Lys-33, and Lys-36. Gly residues predominate over residues 51–65 (KGPGARGPGPEGSGA). The interval 51-75 (KGPGARGPGPEGSGAGSYFSGQGSD) is disordered. Lys-81 is covalently cross-linked (Glycyl lysine isopeptide (Lys-Gly) (interchain with G-Cter in SUMO2)). 2 positions are modified to phosphothreonine: Thr-102 and Thr-104. A Phosphoserine modification is found at Ser-117. A Glycyl lysine isopeptide (Lys-Gly) (interchain with G-Cter in SUMO2) cross-link involves residue Lys-138. Disordered regions lie at residues 181 to 202 (NLSS…VGTG) and 237 to 257 (KEEP…PVSP). Positions 183-192 (SSYSPASAPS) are enriched in low complexity. At Lys-237 the chain carries N6-acetyllysine; alternate. Residue Lys-237 forms a Glycyl lysine isopeptide (Lys-Gly) (interchain with G-Cter in SUMO1); alternate linkage. Residue Lys-237 forms a Glycyl lysine isopeptide (Lys-Gly) (interchain with G-Cter in SUMO2); alternate linkage. The span at 237–250 (KEEPQTVPEARSRD) shows a compositional bias: basic and acidic residues. A Phosphoserine modification is found at Ser-248. Thr-252 carries the phosphothreonine modification. Phosphoserine is present on Ser-256. Positions 265–292 (RIKVERKRLRNRLAATKCRKRKLERIAR) are basic motif. Positions 265 to 328 (RIKVERKRLR…AQLKQKVMTH (64 aa)) constitute a bZIP domain. The tract at residues 293 to 321 (LEDKVKTLKAENAGLSSAAGLLREQVAQL) is leucine-zipper. Residue Lys-340 forms a Glycyl lysine isopeptide (Lys-Gly) (interchain with G-Cter in SUMO2) linkage.

The protein belongs to the bZIP family. Jun subfamily. In terms of assembly, binds DNA as a homodimer or as a heterodimer with another member of the Jun/Fos family. Component of an AP-1 transcription factor complex composed of JUN-FOS heterodimers. As part of the AP-1 transcription factor complex, forms heterodimers with FOSB, thereby binding to the AP-1 consensus sequence and stimulating transcription. Interacts with NFE2 (via its WW domains). In terms of processing, ubiquitinated by ITCH, leading to its degradation.

It localises to the nucleus. Functionally, transcription factor involved in regulating gene activity following the primary growth factor response. Binds to the DNA sequence 5'-TGA[GC]TCA-3'. Heterodimerizes with proteins of the FOS family to form an AP-1 transcription complex, thereby enhancing its DNA binding activity to an AP-1 consensus sequence 5'-TGA[GC]TCA-3' and enhancing its transcriptional activity. This Mus musculus (Mouse) protein is Transcription factor JunB (Junb).